Consider the following 503-residue polypeptide: Probable cytochrome P450 6a19 (503 aa).

Cys445 is a heme binding site.

Belongs to the cytochrome P450 family. Requires heme as cofactor.

The protein resides in the endoplasmic reticulum membrane. The protein localises to the microsome membrane. In terms of biological role, may be involved in the metabolism of insect hormones and in the breakdown of synthetic insecticides. The sequence is that of Probable cytochrome P450 6a19 (Cyp6a19) from Drosophila melanogaster (Fruit fly).